A 413-amino-acid chain; its full sequence is Gamma-glutamyl phosphate reductase (413 aa).

This sequence belongs to the gamma-glutamyl phosphate reductase family.

It is found in the cytoplasm. It catalyses the reaction L-glutamate 5-semialdehyde + phosphate + NADP(+) = L-glutamyl 5-phosphate + NADPH + H(+). Its pathway is amino-acid biosynthesis; L-proline biosynthesis; L-glutamate 5-semialdehyde from L-glutamate: step 2/2. Its function is as follows. Catalyzes the NADPH-dependent reduction of L-glutamate 5-phosphate into L-glutamate 5-semialdehyde and phosphate. The product spontaneously undergoes cyclization to form 1-pyrroline-5-carboxylate. The chain is Gamma-glutamyl phosphate reductase from Salinispora arenicola (strain CNS-205).